The sequence spans 274 residues: NH(3)-dependent NAD(+) synthetase (274 aa).

46-53 (GISGGQDS) contributes to the ATP binding site. Asp-52 provides a ligand contact to Mg(2+). Arg-140 is a deamido-NAD(+) binding site. Thr-160 provides a ligand contact to ATP. Glu-165 serves as a coordination point for Mg(2+). Deamido-NAD(+) is bound by residues Lys-173 and Asp-180. Lys-189 and Thr-211 together coordinate ATP. Residue 260–261 (HK) participates in deamido-NAD(+) binding.

It belongs to the NAD synthetase family. As to quaternary structure, homodimer.

It catalyses the reaction deamido-NAD(+) + NH4(+) + ATP = AMP + diphosphate + NAD(+) + H(+). The protein operates within cofactor biosynthesis; NAD(+) biosynthesis; NAD(+) from deamido-NAD(+) (ammonia route): step 1/1. Catalyzes the ATP-dependent amidation of deamido-NAD to form NAD. Uses ammonia as a nitrogen source. This chain is NH(3)-dependent NAD(+) synthetase, found in Streptococcus uberis (strain ATCC BAA-854 / 0140J).